We begin with the raw amino-acid sequence, 293 residues long: 4-diphosphocytidyl-2-C-methyl-D-erythritol kinase (293 aa).

Residue Lys-11 is part of the active site. 96–106 lines the ATP pocket; it reads PVAAGLGGGSS. Asp-138 is a catalytic residue.

Belongs to the GHMP kinase family. IspE subfamily.

The catalysed reaction is 4-CDP-2-C-methyl-D-erythritol + ATP = 4-CDP-2-C-methyl-D-erythritol 2-phosphate + ADP + H(+). It participates in isoprenoid biosynthesis; isopentenyl diphosphate biosynthesis via DXP pathway; isopentenyl diphosphate from 1-deoxy-D-xylulose 5-phosphate: step 3/6. Functionally, catalyzes the phosphorylation of the position 2 hydroxy group of 4-diphosphocytidyl-2C-methyl-D-erythritol. The protein is 4-diphosphocytidyl-2-C-methyl-D-erythritol kinase of Xanthobacter autotrophicus (strain ATCC BAA-1158 / Py2).